A 73-amino-acid polypeptide reads, in one-letter code: uncharacterized protein (73 aa).

The disordered stretch occupies residues 48-73; it reads AKEPEKKTPSMEAKATSLSPNKASAS. Residues 63 to 73 show a composition bias toward polar residues; the sequence is TSLSPNKASAS.

This is an uncharacterized protein from Saccharomyces cerevisiae (strain ATCC 204508 / S288c) (Baker's yeast).